We begin with the raw amino-acid sequence, 567 residues long: R-linalool synthase QH1, chloroplastic (567 aa).

The transit peptide at 1–24 (GNAYMRIYSTKTTRITANATVNAA) directs the protein to the chloroplast. Residues arginine 282, aspartate 319, aspartate 323, arginine 460, and aspartate 463 each contribute to the (2E)-geranyl diphosphate site. Mg(2+) contacts are provided by aspartate 319 and aspartate 323. Positions 319 to 323 (DDVYD) match the DDXXD motif motif. Residues aspartate 463, threonine 467, and glutamate 471 each coordinate Mg(2+).

This sequence belongs to the terpene synthase family. Tpsb subfamily. Mg(2+) is required as a cofactor. In terms of tissue distribution, highly expressed in leaves and lower levels in inflorescences. Not detected in stems, stem epidermis, stem stele or roots.

The protein localises to the plastid. It is found in the chloroplast. The enzyme catalyses (2E)-geranyl diphosphate + H2O = (R)-linalool + diphosphate. The protein operates within secondary metabolite biosynthesis; terpenoid biosynthesis. Monoterpene synthase that catalyzes the formation of (3R)-linalool from geranyl diphosphate, but not from isopentenyl diphosphate, dimethylallyl diphosphate, chrysanthemyl diphosphate, farnesyl diphosphate, (+)-copalyl diphosphate or geranylgeranyl diphosphate. In Artemisia annua (Sweet wormwood), this protein is R-linalool synthase QH1, chloroplastic (QH1).